A 1252-amino-acid polypeptide reads, in one-letter code: DNA-directed RNA polymerase subunit beta (1252 aa).

The protein belongs to the RNA polymerase beta chain family. As to quaternary structure, the RNAP catalytic core consists of 2 alpha, 1 beta, 1 beta' and 1 omega subunit. When a sigma factor is associated with the core the holoenzyme is formed, which can initiate transcription.

The enzyme catalyses RNA(n) + a ribonucleoside 5'-triphosphate = RNA(n+1) + diphosphate. DNA-dependent RNA polymerase catalyzes the transcription of DNA into RNA using the four ribonucleoside triphosphates as substrates. This Chlamydia caviae (strain ATCC VR-813 / DSM 19441 / 03DC25 / GPIC) (Chlamydophila caviae) protein is DNA-directed RNA polymerase subunit beta.